We begin with the raw amino-acid sequence, 161 residues long: Lincosamide resistance protein (161 aa).

In Staphylococcus haemolyticus, this protein is Lincosamide resistance protein (linA).